The following is a 158-amino-acid chain: Nucleoside diphosphate kinase (158 aa).

K16, F64, R92, T98, R109, and N119 together coordinate ATP. The Pros-phosphohistidine intermediate role is filled by H122.

It belongs to the NDK family. Mg(2+) serves as cofactor.

It is found in the cytoplasm. The catalysed reaction is a 2'-deoxyribonucleoside 5'-diphosphate + ATP = a 2'-deoxyribonucleoside 5'-triphosphate + ADP. It catalyses the reaction a ribonucleoside 5'-diphosphate + ATP = a ribonucleoside 5'-triphosphate + ADP. In terms of biological role, major role in the synthesis of nucleoside triphosphates other than ATP. The ATP gamma phosphate is transferred to the NDP beta phosphate via a ping-pong mechanism, using a phosphorylated active-site intermediate. The protein is Nucleoside diphosphate kinase of Haloquadratum walsbyi (strain DSM 16790 / HBSQ001).